A 315-amino-acid polypeptide reads, in one-letter code: Secreted frizzled-related protein 3 (315 aa).

Positions methionine 1–alanine 21 are cleaved as a signal peptide. The 121-residue stretch at glycine 22 to proline 142 folds into the FZ domain. Cystine bridges form between cysteine 27–cysteine 88, cysteine 35–cysteine 81, cysteine 72–cysteine 111, cysteine 100–cysteine 139, and cysteine 104–cysteine 128. A glycan (N-linked (GlcNAc...) asparagine) is linked at asparagine 41. The 121-residue stretch at cysteine 170–lysine 290 folds into the NTR domain. Residues lysine 284–serine 315 form a disordered region.

It belongs to the secreted frizzled-related protein (sFRP) family.

The protein resides in the secreted. Its function is as follows. Soluble frizzled-related proteins (sFRPS) function as modulators of Wnt signaling through direct interaction with Wnts. They have a role in regulating cell growth and differentiation in specific cell types. SFRP3/FRZB appears to be involved in limb skeletogenesis. Antagonist of Wnt8 signaling. Regulates chondrocyte maturation and long bone development. The sequence is that of Secreted frizzled-related protein 3 (FRZB) from Gallus gallus (Chicken).